A 671-amino-acid polypeptide reads, in one-letter code: Palmitoleoyl-protein carboxylesterase NOTUM (671 aa).

The N-terminal stretch at 1–46 (MAVEQIDKMAAKAGEATNKWIKPQQPLLTLLLLLATFSQLPAVCSS) is a signal peptide. Asn-95 carries an N-linked (GlcNAc...) asparagine glycan. Residues Ser-237 and Asp-338 each act as charge relay system in the active site. Asn-372 carries N-linked (GlcNAc...) asparagine glycosylation. His-384 functions as the Charge relay system in the catalytic mechanism. Residues 411-592 (HSTRSRRHDK…TKSKKRHRVP (182 aa)) form a disordered region. Over residues 439–454 (NQRHQRHRQRLQRQKH) the composition is skewed to basic residues. Positions 470-486 (LSKEEREERKRLRQEQR) are enriched in basic and acidic residues. The span at 487–497 (QRRKQRRRQQQ) shows a compositional bias: basic residues. Over residues 505–514 (QEHRNKKDNS) the composition is skewed to basic and acidic residues. Residues 570-583 (PQKTRSSNNASAGT) show a composition bias toward polar residues. 2 N-linked (GlcNAc...) asparagine glycosylation sites follow: Asn-578 and Asn-612.

This sequence belongs to the pectinacetylesterase family. Notum subfamily.

The protein resides in the secreted. It localises to the cell surface. The enzyme catalyses [Wnt protein]-O-(9Z)-hexadecenoyl-L-serine + H2O = [Wnt protein]-L-serine + (9Z)-hexadecenoate + H(+). Carboxylesterase that acts as a key negative regulator of the Wnt signaling pathway by specifically mediating depalmitoleoylation of WNT proteins. Serine palmitoleoylation of WNT proteins is required for efficient binding to frizzled receptors. Also acts as a regulator of long-range activity of Hedgehog (hh), possibly by regulating the switch between low and high level hh pathway signaling. This Drosophila melanogaster (Fruit fly) protein is Palmitoleoyl-protein carboxylesterase NOTUM.